The chain runs to 246 residues: tRNA pseudouridine synthase A (246 aa).

Aspartate 52 (nucleophile) is an active-site residue. Tyrosine 110 is a substrate binding site.

Belongs to the tRNA pseudouridine synthase TruA family. Homodimer.

The catalysed reaction is uridine(38/39/40) in tRNA = pseudouridine(38/39/40) in tRNA. Formation of pseudouridine at positions 38, 39 and 40 in the anticodon stem and loop of transfer RNAs. The protein is tRNA pseudouridine synthase A of Exiguobacterium sp. (strain ATCC BAA-1283 / AT1b).